The primary structure comprises 211 residues: Thymidylate kinase (211 aa).

7–14 (GIDGCGKT) lines the ATP pocket.

It belongs to the thymidylate kinase family.

It carries out the reaction dTMP + ATP = dTDP + ADP. Functionally, phosphorylation of dTMP to form dTDP in both de novo and salvage pathways of dTTP synthesis. This is Thymidylate kinase from Anaplasma marginale (strain St. Maries).